A 404-amino-acid polypeptide reads, in one-letter code: Probable tRNA sulfurtransferase (404 aa).

The region spanning 60-165 is the THUMP domain; the sequence is QPVVEALKLV…DEAAYISYEE (106 aa). ATP-binding positions include 183 to 184, 208 to 209, Arg-265, Gly-287, and Gln-296; these read ML and HF.

It belongs to the ThiI family.

The protein localises to the cytoplasm. It catalyses the reaction [ThiI sulfur-carrier protein]-S-sulfanyl-L-cysteine + a uridine in tRNA + 2 reduced [2Fe-2S]-[ferredoxin] + ATP + H(+) = [ThiI sulfur-carrier protein]-L-cysteine + a 4-thiouridine in tRNA + 2 oxidized [2Fe-2S]-[ferredoxin] + AMP + diphosphate. It carries out the reaction [ThiS sulfur-carrier protein]-C-terminal Gly-Gly-AMP + S-sulfanyl-L-cysteinyl-[cysteine desulfurase] + AH2 = [ThiS sulfur-carrier protein]-C-terminal-Gly-aminoethanethioate + L-cysteinyl-[cysteine desulfurase] + A + AMP + 2 H(+). The protein operates within cofactor biosynthesis; thiamine diphosphate biosynthesis. Its function is as follows. Catalyzes the ATP-dependent transfer of a sulfur to tRNA to produce 4-thiouridine in position 8 of tRNAs, which functions as a near-UV photosensor. Also catalyzes the transfer of sulfur to the sulfur carrier protein ThiS, forming ThiS-thiocarboxylate. This is a step in the synthesis of thiazole, in the thiamine biosynthesis pathway. The sulfur is donated as persulfide by IscS. This Streptococcus pyogenes serotype M6 (strain ATCC BAA-946 / MGAS10394) protein is Probable tRNA sulfurtransferase.